Reading from the N-terminus, the 287-residue chain is ATP synthase gamma chain (287 aa).

This sequence belongs to the ATPase gamma chain family. F-type ATPases have 2 components, CF(1) - the catalytic core - and CF(0) - the membrane proton channel. CF(1) has five subunits: alpha(3), beta(3), gamma(1), delta(1), epsilon(1). CF(0) has three main subunits: a, b and c.

The protein localises to the cell membrane. Its function is as follows. Produces ATP from ADP in the presence of a proton gradient across the membrane. The gamma chain is believed to be important in regulating ATPase activity and the flow of protons through the CF(0) complex. This is ATP synthase gamma chain from Bacillus velezensis (strain DSM 23117 / BGSC 10A6 / LMG 26770 / FZB42) (Bacillus amyloliquefaciens subsp. plantarum).